The sequence spans 216 residues: Ribosomal RNA small subunit methyltransferase G (216 aa).

S-adenosyl-L-methionine contacts are provided by residues G73, L78, 124-125, and R139; that span reads AE.

The protein belongs to the methyltransferase superfamily. RNA methyltransferase RsmG family.

The protein resides in the cytoplasm. Functionally, specifically methylates the N7 position of guanine in position 518 of 16S rRNA. The protein is Ribosomal RNA small subunit methyltransferase G of Pseudarthrobacter chlorophenolicus (strain ATCC 700700 / DSM 12829 / CIP 107037 / JCM 12360 / KCTC 9906 / NCIMB 13794 / A6) (Arthrobacter chlorophenolicus).